Here is a 350-residue protein sequence, read N- to C-terminus: Heat-inducible transcription repressor HrcA (350 aa).

It belongs to the HrcA family.

Functionally, negative regulator of class I heat shock genes (grpE-dnaK-dnaJ and groELS operons). Prevents heat-shock induction of these operons. The protein is Heat-inducible transcription repressor HrcA of Xanthomonas axonopodis pv. citri (strain 306).